We begin with the raw amino-acid sequence, 409 residues long: Salivary endonuclease (409 aa).

An N-terminal signal peptide occupies residues 1–20 (MHLQLNLCAILLSVLNGIQG). Asn-37 and Asn-102 each carry an N-linked (GlcNAc...) asparagine glycan. His-216 serves as the catalytic Proton acceptor. A Mg(2+)-binding site is contributed by Asn-246. 2 N-linked (GlcNAc...) asparagine glycosylation sites follow: Asn-351 and Asn-381.

It belongs to the DNA/RNA non-specific endonuclease family. Requires Mg(2+) as cofactor. Salivary gland.

It is found in the secreted. Hydrolyzes single-stranded and double-stranded DNA with little sequence specificity. Inhibits contact pathway of blood coagulation in the host by preventing activation of coagulation factor XII (F12) triggered by soluble DNA. Modestly up-regulates expression of CSF2, CXCL1 and CXCL8 in cultured human dermal microvascular endothelial cells. At higher doses promotes host neutrophil recruitment at the injection site in mouse model. Its function is as follows. (Microbial infection) Increases Leishmania major survival in the host by disrupting parasite-induced neutrophil extracellular traps. Exacerbates L.major parasite infectivity and increases cutaneous lesions in mouse model. The sequence is that of Salivary endonuclease from Lutzomyia longipalpis (Sand fly).